We begin with the raw amino-acid sequence, 431 residues long: Enolase (431 aa).

A (2R)-2-phosphoglycerate-binding site is contributed by Gln167. Glu209 functions as the Proton donor in the catalytic mechanism. Residues Asp246, Glu289, and Asp316 each coordinate Mg(2+). Residues Lys341, Arg370, Ser371, and Lys392 each coordinate (2R)-2-phosphoglycerate. Lys341 serves as the catalytic Proton acceptor.

This sequence belongs to the enolase family. Component of the RNA degradosome, a multiprotein complex involved in RNA processing and mRNA degradation. The cofactor is Mg(2+).

It is found in the cytoplasm. The protein localises to the secreted. It localises to the cell surface. It carries out the reaction (2R)-2-phosphoglycerate = phosphoenolpyruvate + H2O. It functions in the pathway carbohydrate degradation; glycolysis; pyruvate from D-glyceraldehyde 3-phosphate: step 4/5. Functionally, catalyzes the reversible conversion of 2-phosphoglycerate (2-PG) into phosphoenolpyruvate (PEP). It is essential for the degradation of carbohydrates via glycolysis. This is Enolase from Hahella chejuensis (strain KCTC 2396).